The sequence spans 28 residues: Gastrin-releasing peptide (28 aa).

Met-28 bears the Methionine amide mark.

The protein belongs to the bombesin/neuromedin-B/ranatensin family.

It is found in the secreted. The protein localises to the cytoplasmic vesicle. The protein resides in the secretory vesicle lumen. Its function is as follows. Stimulates the release of gastrin and other gastrointestinal hormones. This Alligator mississippiensis (American alligator) protein is Gastrin-releasing peptide (GRP).